A 1581-amino-acid chain; its full sequence is ATP-binding cassette sub-family C member 8 (1581 aa).

Residues 1 to 30 (MPLAFCGSENHSAAYRVDQGVLNNGCFVDA) are Extracellular-facing. The cysteines at positions 6 and 26 are disulfide-linked. N10 carries an N-linked (GlcNAc...) asparagine glycan. Residues 31 to 47 (LNVVPHVFLLFITFPIL) traverse the membrane as a helical segment. The Cytoplasmic segment spans residues 48 to 72 (FIGWGSQSSKVHIHHSTWLHFPGHN). Residues 73 to 89 (LRWILTFMLLFVLVCEI) traverse the membrane as a helical segment. Residues 90–106 (AEGILSDGVTESHHLHL) are Extracellular-facing. Residues 107–123 (YMPAGMAFMAAVTSVVY) form a helical membrane-spanning segment. Residues 124–136 (YHNIETSNFPKLL) lie on the Cytoplasmic side of the membrane. The helical transmembrane segment at 137–153 (IALLVYWTLAFITKTIK) threads the bilayer. At 154–169 (FVKFLDHAIGFSQLRF) the chain is on the extracellular side. The chain crosses the membrane as a helical span at residues 170–186 (CLTGLLVILYGMLLLVE). The Cytoplasmic segment spans residues 187-303 (VNVIRVRRYI…AFGRRLVLSS (117 aa)). Residues 299-602 (LVLSSTFRIL…LSSVVRSTVK (304 aa)) form the ABC transmembrane type-1 1 domain. The helical transmembrane segment at 304-319 (TFRILADLLGFAGPLC) threads the bilayer. Residues 320 to 356 (IFGIVDHLGKENDVFQPKTQFLGVYFVSSQEFLANAY) lie on the Extracellular side of the membrane. Residues 357–372 (VLAVLLFLALLLQRTF) traverse the membrane as a helical segment. At 373–438 (LQASYYVAIE…MWFFFLCPNL (66 aa)) the chain is on the cytoplasmic side. The chain crosses the membrane as a helical span at residues 439–454 (WAMPVQIIVGVILLYY). Residues 455-460 (ILGVSA) are Extracellular-facing. A helical transmembrane segment spans residues 461 to 473 (LIGAAVIILLAPV). Residues 474–541 (QYFVATKLSQ…SLRAFAIYTS (68 aa)) are Cytoplasmic-facing. The chain crosses the membrane as a helical span at residues 542–557 (ISIFMNTAIPIAAVLI). The Extracellular segment spans residues 558–576 (TFVGHVSFFKEADFSPSVA). The helical transmembrane segment at 577 to 592 (FASLSLFHILVTPLFL) threads the bilayer. At 593 to 1012 (LSSVVRSTVK…YLSSAGILLL (420 aa)) the chain is on the cytoplasmic side. The ABC transporter 1 domain occupies 679–929 (VQIMGGYFTW…ECQLFEHWKT (251 aa)). Positions 688, 716, 720, and 721 each coordinate ATP. S720 is a Mg(2+) binding site. Q774 is a Mg(2+) binding site. Over residues 935 to 949 (DQELEKETVTERKAT) the composition is skewed to basic and acidic residues. The interval 935 to 987 (DQELEKETVTERKATEPPQGLSRAMSSRDGLLQDEEEEEEEAAESEEDDNLSS) is disordered. The span at 966 to 984 (LQDEEEEEEEAAESEEDDN) shows a compositional bias: acidic residues. Residues 1012 to 1306 (LSLLVFSQLL…MVRNLADMEL (295 aa)) form the ABC transmembrane type-1 2 domain. Residues 1013–1030 (SLLVFSQLLKHMVLVAID) form a helical membrane-spanning segment. Residues 1031 to 1066 (YWLAKWTDSALTLTPAARNCSLSQECTLDQTVYAMV) lie on the Extracellular side of the membrane. A glycan (N-linked (GlcNAc...) asparagine) is linked at N1049. The chain crosses the membrane as a helical span at residues 1067–1083 (FTVLCSLGIVLCLVTSV). At 1084-1142 (TVEWTGLKVAKRLHRSLLNRIILAPMRFFETTPLGSILNRFSSDCNTIDQHIPSTLECL) the chain is on the cytoplasmic side. A helical transmembrane segment spans residues 1143–1160 (SRSTLLCVSALAVISYVT). P1161 is a topological domain (extracellular). A helical membrane pass occupies residues 1162–1174 (VFLVALLPLAIVC). Residues 1175–1248 (YFIQKYFRVA…FLTAANRWLE (74 aa)) lie on the Cytoplasmic side of the membrane. Residues 1249–1264 (VRMEYIGACVVLIAAV) form a helical membrane-spanning segment. The Extracellular portion of the chain corresponds to 1265-1280 (TSISNSLHRELSAGLV). The chain crosses the membrane as a helical span at residues 1281-1296 (GLGLTYALMVSNYLNW). Residues 1297–1581 (MVRNLADMEL…VFASFVRADK (285 aa)) are Cytoplasmic-facing. Positions 1344 to 1578 (IQIQNLSVRY…KDSVFASFVR (235 aa)) constitute an ABC transporter 2 domain. ADP contacts are provided by T1380, G1381, G1383, K1384, S1385, and S1386. Position 1482 (S1482) interacts with ATP.

This sequence belongs to the ABC transporter superfamily. ABCC family. Conjugate transporter (TC 3.A.1.208) subfamily. As to quaternary structure, forms an heterooctamer with KCNJ11; four ABCC8/SUR1 molecules interact with one KCNJ11 homotetramer.

Its subcellular location is the cell membrane. With respect to regulation, KATP channels are regulated by cytoplasmic ATP/ADP ratios; ATP inhibits the channel by closing the pore, while ADP activates the channel. Activated by phosphatidylinositol 4,5-biphosphate (PtdIns(4,5)P2). In terms of biological role, regulator subunit of pancreatic ATP-sensitive potassium channel (KATP), playing a major role in the regulation of insulin release. In pancreatic cells, it forms KATP channels with KCNJ11; KCNJ11 forms the channel pore while ABCC8 is required for activation and regulation. In Homo sapiens (Human), this protein is ATP-binding cassette sub-family C member 8 (ABCC8).